The following is a 310-amino-acid chain: MSREILRIATRSSPLAIWQAEYVQQRLESLHEGLRVELVRIKTQGDKILDTPLAKIGGKGLFVKELEEAMMDGRADIAVHSMKDVPMELPPGFALPVICEREDPRDAFVSNTFDGLSSLPHGACVGTSSLRRQAQVKANRPDLVVNSLRGNVQTRLGKLDAGNFDAIILAAAGLKRLEMHDRIRYEMPPEESLPAVGQGAVGIECREGDESTIELLSPLSDVDTWDRVVAERAMNRRLEGGCQVPIAGFALLEDGQLWLRGLVAEEDGSRVLRAEGTAPRGQGAELGIDIAEQLLAQGADEILKALYARQ.

Position 242 is an S-(dipyrrolylmethanemethyl)cysteine (C242).

The protein belongs to the HMBS family. Monomer. It depends on dipyrromethane as a cofactor.

The catalysed reaction is 4 porphobilinogen + H2O = hydroxymethylbilane + 4 NH4(+). It participates in porphyrin-containing compound metabolism; protoporphyrin-IX biosynthesis; coproporphyrinogen-III from 5-aminolevulinate: step 2/4. In terms of biological role, tetrapolymerization of the monopyrrole PBG into the hydroxymethylbilane pre-uroporphyrinogen in several discrete steps. The polypeptide is Porphobilinogen deaminase (Alcanivorax borkumensis (strain ATCC 700651 / DSM 11573 / NCIMB 13689 / SK2)).